We begin with the raw amino-acid sequence, 464 residues long: NAD(P) transhydrogenase subunit beta (464 aa).

The next 6 membrane-spanning stretches (helical) occupy residues 54 to 74, 86 to 106, 126 to 146, 164 to 184, 191 to 211, and 227 to 247; these read VQAYAWIVLAIAIGGAIGTVI, LVAAFHSLVGMAAVLVATGAL, VEMSLGLAVGAITFSGSVIAF, HPLNAVLGILLVVLLVVFAAT, FALMILAFALGFLLIIPIGGA, and AAAGIGFTLGNPLLIIAGALV. NADP(+) contacts are provided by residues 316–317, 348–353, 390–394, 425–432, and 451–452; these read YG, VAGRMP, GANDV, KRSMASGY, and DA.

This sequence belongs to the PNT beta subunit family. As to quaternary structure, complex of an alpha and a beta chain; in Rhodospirillum, the alpha chain seems to be made of two subunits.

The protein resides in the cell inner membrane. The enzyme catalyses NAD(+) + NADPH + H(+)(in) = NADH + NADP(+) + H(+)(out). In terms of biological role, the transhydrogenation between NADH and NADP is coupled to respiration and ATP hydrolysis and functions as a proton pump across the membrane. This is NAD(P) transhydrogenase subunit beta (pntB) from Rhodospirillum rubrum (strain ATCC 11170 / ATH 1.1.1 / DSM 467 / LMG 4362 / NCIMB 8255 / S1).